Reading from the N-terminus, the 201-residue chain is IMP cyclohydrolase (201 aa).

Belongs to the archaeal IMP cyclohydrolase family.

It catalyses the reaction IMP + H2O = 5-formamido-1-(5-phospho-D-ribosyl)imidazole-4-carboxamide. It functions in the pathway purine metabolism; IMP biosynthesis via de novo pathway; IMP from 5-formamido-1-(5-phospho-D-ribosyl)imidazole-4-carboxamide: step 1/1. Catalyzes the cyclization of 5-formylamidoimidazole-4-carboxamide ribonucleotide to IMP. The polypeptide is IMP cyclohydrolase (Methanococcus maripaludis (strain C7 / ATCC BAA-1331)).